An 870-amino-acid polypeptide reads, in one-letter code: UvrABC system protein B (870 aa).

The Helicase ATP-binding domain maps to 20 to 410; the sequence is EGVDNNDRTQ…VFAEQVIRPT (391 aa). 33–40 provides a ligand contact to ATP; the sequence is GVTGSGKT. Residues 86–109 carry the Beta-hairpin motif; sequence YYDYYQPEAYVPRTDTFIEKESSI. The Helicase C-terminal domain occupies 425-591; the sequence is QVDDVVGEIR…SVKSRISDIL (167 aa). A UVR domain is found at 620-655; it reads KAHLDAMEKQMRDAAANLDFEKAARIRDEIKRLREM. Disordered stretches follow at residues 671-698 and 741-870; these read ESPV…QERF and AKPS…RPGK. Basic residues predominate over residues 679-689; it reads KGKHNKGVAKH. 2 stretches are compositionally biased toward basic and acidic residues: residues 793 to 808 and 827 to 836; these read NSLD…KPVE and TDVKDRDDSA. A compositionally biased stretch (basic residues) spans 858–870; that stretch reads EKRRPGKTGRPGK.

The protein belongs to the UvrB family. Forms a heterotetramer with UvrA during the search for lesions. Interacts with UvrC in an incision complex.

It localises to the cytoplasm. In terms of biological role, the UvrABC repair system catalyzes the recognition and processing of DNA lesions. A damage recognition complex composed of 2 UvrA and 2 UvrB subunits scans DNA for abnormalities. Upon binding of the UvrA(2)B(2) complex to a putative damaged site, the DNA wraps around one UvrB monomer. DNA wrap is dependent on ATP binding by UvrB and probably causes local melting of the DNA helix, facilitating insertion of UvrB beta-hairpin between the DNA strands. Then UvrB probes one DNA strand for the presence of a lesion. If a lesion is found the UvrA subunits dissociate and the UvrB-DNA preincision complex is formed. This complex is subsequently bound by UvrC and the second UvrB is released. If no lesion is found, the DNA wraps around the other UvrB subunit that will check the other stand for damage. The chain is UvrABC system protein B from Mesorhizobium japonicum (strain LMG 29417 / CECT 9101 / MAFF 303099) (Mesorhizobium loti (strain MAFF 303099)).